Consider the following 215-residue polypeptide: Thiamine import ATP-binding protein ThiQ (215 aa).

The region spanning 2–215 (IYLNNVILND…GQISQLQKGV (214 aa)) is the ABC transporter domain. Residue 32–39 (GESGAGKS) participates in ATP binding.

It belongs to the ABC transporter superfamily. Thiamine importer (TC 3.A.1.19.1) family. The complex is composed of two ATP-binding proteins (ThiQ), two transmembrane proteins (ThiP) and a solute-binding protein (ThiB).

It is found in the cell inner membrane. The catalysed reaction is thiamine(out) + ATP + H2O = thiamine(in) + ADP + phosphate + H(+). Its function is as follows. Part of the ABC transporter complex ThiBPQ involved in thiamine import. Responsible for energy coupling to the transport system. In Haemophilus influenzae (strain 86-028NP), this protein is Thiamine import ATP-binding protein ThiQ.